The following is a 68-amino-acid chain: Urocalcin (68 aa).

Positions 1–27 (MKASTLVVIFIVIFITISSFSIHDVQA) are cleaved as a signal peptide. Residues 28–35 (SGVEKREQ) constitute a propeptide that is removed on maturation. 3 disulfides stabilise this stretch: Cys38-Cys52, Cys45-Cys56, and Cys51-Cys67. Residues 57-59 (KRR) form an essential for stimulation of [3H]ryanodine binding to RYR1 region.

This sequence belongs to the scorpion calcin family. As to expression, expressed by the venom gland.

It localises to the secreted. Its function is as follows. This toxin only weakly stabilizes ryanodine receptor 1 (RyR1) opening in a long-lasting subconductance state (55% of the full conductance state obtained only at high concentrations (1 uM)). In addition, it has been shown to dose-dependently stimulate ryanodine binding to RyR1 with the lowest activity of all calcins (EC(50)=376 nM). It also augments the bell-shaped calcium-[3H]ryanodine binding curve that is maximal at about 10 uM calcium concentration. It binds a different site as ryanodine. It acts synergistically with caffeine. In contrast to other calcins, it does not trigger calcium release from sarcoplasmic vesicles even at high concentration (1 uM). In vivo, intracerebroventricular injection into mice induces neurotoxic symptoms, followed by death. This is Urocalcin from Urodacus yaschenkoi (Inland robust scorpion).